A 131-amino-acid polypeptide reads, in one-letter code: Small ribosomal subunit protein bS18 (131 aa).

The span at methionine 1–alanine 10 shows a compositional bias: polar residues. The segment at methionine 1–glycine 60 is disordered. Positions serine 17 to arginine 27 are enriched in gly residues. Basic and acidic residues predominate over residues glycine 28 to arginine 44.

This sequence belongs to the bacterial ribosomal protein bS18 family. In terms of assembly, part of the 30S ribosomal subunit. Forms a tight heterodimer with protein bS6.

Binds as a heterodimer with protein bS6 to the central domain of the 16S rRNA, where it helps stabilize the platform of the 30S subunit. This Myxococcus xanthus (strain DK1622) protein is Small ribosomal subunit protein bS18.